The sequence spans 86 residues: Large ribosomal subunit protein bL31 (86 aa).

The disordered stretch occupies residues 65 to 86 (YGMGSANSATSKEQKEEKDSKK). A compositionally biased stretch (basic and acidic residues) spans 76–86 (KEQKEEKDSKK).

This sequence belongs to the bacterial ribosomal protein bL31 family. Type A subfamily. Part of the 50S ribosomal subunit.

In terms of biological role, binds the 23S rRNA. This chain is Large ribosomal subunit protein bL31, found in Prochlorococcus marinus (strain AS9601).